The chain runs to 341 residues: Methionine import ATP-binding protein MetN 3 (341 aa).

One can recognise an ABC transporter domain in the interval 2 to 241; sequence ILLENVKKIY…PQQDITKRFV (240 aa). Residue 38–45 coordinates ATP; sequence GYSGAGKS.

It belongs to the ABC transporter superfamily. Methionine importer (TC 3.A.1.24) family. As to quaternary structure, the complex is composed of two ATP-binding proteins (MetN), two transmembrane proteins (MetI) and a solute-binding protein (MetQ).

It is found in the cell membrane. It catalyses the reaction L-methionine(out) + ATP + H2O = L-methionine(in) + ADP + phosphate + H(+). The catalysed reaction is D-methionine(out) + ATP + H2O = D-methionine(in) + ADP + phosphate + H(+). In terms of biological role, part of the ABC transporter complex MetNIQ involved in methionine import. Responsible for energy coupling to the transport system. The sequence is that of Methionine import ATP-binding protein MetN 3 from Bacillus cereus (strain ZK / E33L).